The sequence spans 131 residues: Small ribosomal subunit protein uS11 (131 aa).

Belongs to the universal ribosomal protein uS11 family. Part of the 30S ribosomal subunit. Interacts with proteins S7 and S18. Binds to IF-3.

Its function is as follows. Located on the platform of the 30S subunit, it bridges several disparate RNA helices of the 16S rRNA. Forms part of the Shine-Dalgarno cleft in the 70S ribosome. The chain is Small ribosomal subunit protein uS11 from Wolinella succinogenes (strain ATCC 29543 / DSM 1740 / CCUG 13145 / JCM 31913 / LMG 7466 / NCTC 11488 / FDC 602W) (Vibrio succinogenes).